Consider the following 436-residue polypeptide: MALPTIAIVGRPNVGKSTLFNRIAGERISIVEDVEGVTRDRIYATGEWLNRSFSMIDTGGIDDVDAPFMEQIKHQAEIAMEEADVIVFVVSGKEGITDADEYVARKLYKTHKPVILAVNKVDNPEMRNDIYDFYALGLGEPLPISSVHGIGTGDVLDAIVENLPNEYEEENPDVIKFSLIGRPNVGKSSLINAILGEDRVIASPVAGTTRDAIDTHFTDTDGQEFTMIDTAGMRKSGKVYENTEKYSVMRAMRAIDRSDVVLMVINAEEGIREYDKRIAGFAHEAGKGMIIVVNKWDTLEKDNHTMKNWEEDIREQFQYLPYAPIIFVSALTKQRLHKLPEMIKQISESQNTRIPSAVLNDVIMDAIAINPTPTDKGKRLKIFYATQVATKPPTFVIFVNEEELMHFSYLRFLENQIRKAFVFEGTPIHLIARKRK.

2 consecutive EngA-type G domains span residues 4 to 167 (PTIA…PNEY) and 175 to 351 (IKFS…ESQN). Residues 10 to 17 (GRPNVGKS), 57 to 61 (DTGGI), 119 to 122 (NKVD), 181 to 188 (GRPNVGKS), 229 to 233 (DTAGM), and 294 to 297 (NKWD) each bind GTP. Residues 352–436 (TRIPSAVLND…PIHLIARKRK (85 aa)) form the KH-like domain.

It belongs to the TRAFAC class TrmE-Era-EngA-EngB-Septin-like GTPase superfamily. EngA (Der) GTPase family. As to quaternary structure, associates with the 50S ribosomal subunit.

Its function is as follows. GTPase that plays an essential role in the late steps of ribosome biogenesis. The chain is GTPase Der from Streptococcus pneumoniae (strain JJA).